We begin with the raw amino-acid sequence, 20 residues long: Hemocyanin subunit Ib (20 aa).

Residues 1-20 are disordered; sequence DSVGSTTAHKQQNINHLLDK.

The protein belongs to the tyrosinase family. Hemocyanin subfamily. In terms of assembly, composed of 3 major subunits (IB, II and III) and 1 minor subunit (IA) which form homohexamers and heterohexamers. May also form larger structures. As to expression, hemolymph.

It is found in the secreted. Its subcellular location is the extracellular space. Its function is as follows. Hemocyanins are copper-containing oxygen carriers occurring freely dissolved in the hemolymph of many mollusks and arthropods. This Panulirus japonicus (Japanese spiny lobster) protein is Hemocyanin subunit Ib.